We begin with the raw amino-acid sequence, 865 residues long: NBPF family member NBPF11 (865 aa).

Residues 70 to 130 are a coiled coil; it reads MLRNERQFKE…RSLNEHLQAL (61 aa). The interval 161-200 is disordered; that stretch reads KLSPENDEDEDEDVQVEEDEKVLESSAPREVQKAEESKVP. Positions 165–181 are enriched in acidic residues; the sequence is ENDEDEDEDVQVEEDEK. Residues 165-259 enclose the Olduvai 1 domain; that stretch reads ENDEDEDEDV…GCQDALNILP (95 aa). The span at 190–200 shows a compositional bias: basic and acidic residues; the sequence is EVQKAEESKVP. Residues 339–401 adopt a coiled-coil conformation; sequence KSMLRNERQF…RSLNEHLQAL (63 aa). 5 Olduvai domains span residues 436–528, 529–617, 620–675, 676–767, and 770–865; these read ENDN…HIIP, ENES…ATGP, SREL…VDMD, EIEK…PPCP, and SREL…SAAC. 2 disordered regions span residues 450–475 and 520–567; these read AEKV…EDSL and WEDA…GYST. 2 stretches are compositionally biased toward acidic residues: residues 530-539 and 550-562; these read NESDDEEEEE and ESEE…ESWD. Positions 829–865 are disordered; the sequence is RGRGRKEGEEDQRRKEEGEEKKGKKIKTHHAPGSAAC. The span at 833 to 850 shows a compositional bias: basic and acidic residues; sequence RKEGEEDQRRKEEGEEKK.

The protein belongs to the NBPF family. Expressed in spinal cord.

The protein resides in the cytoplasm. The protein is NBPF family member NBPF11 of Homo sapiens (Human).